Reading from the N-terminus, the 345-residue chain is Phosphoribosylformylglycinamidine cyclo-ligase (345 aa).

This sequence belongs to the AIR synthase family. As to quaternary structure, homodimer.

The protein resides in the cytoplasm. The catalysed reaction is 2-formamido-N(1)-(5-O-phospho-beta-D-ribosyl)acetamidine + ATP = 5-amino-1-(5-phospho-beta-D-ribosyl)imidazole + ADP + phosphate + H(+). It functions in the pathway purine metabolism; IMP biosynthesis via de novo pathway; 5-amino-1-(5-phospho-D-ribosyl)imidazole from N(2)-formyl-N(1)-(5-phospho-D-ribosyl)glycinamide: step 2/2. This chain is Phosphoribosylformylglycinamidine cyclo-ligase, found in Escherichia coli O157:H7.